The chain runs to 173 residues: Alpha-crystallin A chain (173 aa).

Met-1 carries the N-acetylmethionine modification. The required for complex formation with BFSP1 and BFSP2 stretch occupies residues 1–63 (MDVTIQHPWF…RTVLDSGVSE (63 aa)). Gln-6 carries the deamidated glutamine; partial modification. The residue at position 45 (Ser-45) is a Phosphoserine. Gln-50 is subject to Deamidated glutamine; partial. The 111-residue stretch at 52–162 (LFRTVLDSGV…GHSERAIPVS (111 aa)) folds into the sHSP domain. The residue at position 70 (Lys-70) is an N6-acetyllysine. The residue at position 90 (Gln-90) is a Deamidated glutamine; partial. N6-acetyllysine is present on Lys-99. His-100 is a Zn(2+) binding site. Position 101 is a deamidated asparagine; partial (Asn-101). Glu-102 and His-107 together coordinate Zn(2+). Residue Ser-122 is modified to Phosphoserine. Deamidated asparagine; partial is present on Asn-123. Residues 145–173 (KVQSGLDAGHSERAIPVSREEKPSSAPSS) are disordered. Residue Gln-147 is modified to Deamidated glutamine; partial. Residues 153-167 (GHSERAIPVSREEKP) are compositionally biased toward basic and acidic residues. A Zn(2+)-binding site is contributed by His-154. A glycan (O-linked (GlcNAc) serine) is linked at Ser-162.

It belongs to the small heat shock protein (HSP20) family. As to quaternary structure, heteromer composed of three CRYAA and one CRYAB subunits. Inter-subunit bridging via zinc ions enhances stability, which is crucial as there is no protein turn over in the lens. Can also form homodimers and homotetramers (dimers of dimers) which serve as the building blocks of homooligomers. Within homooligomers, the zinc-binding motif is created from residues of 3 different molecules. His-100 and Glu-102 from one molecule are ligands of the zinc ion, and His-107 and His-154 residues from additional molecules complete the site with tetrahedral coordination geometry. Part of a complex required for lens intermediate filament formation composed of BFSP1, BFSP2 and CRYAA. In terms of processing, acetylation at Lys-70 may increase chaperone activity. Undergoes age-dependent proteolytical cleavage at the C-terminus.

The protein resides in the cytoplasm. It localises to the nucleus. Contributes to the transparency and refractive index of the lens. Acts as a chaperone, preventing aggregation of various proteins under a wide range of stress conditions. Required for the correct formation of lens intermediate filaments as part of a complex composed of BFSP1, BFSP2 and CRYAA. This is Alpha-crystallin A chain (CRYAA) from Eulemur fulvus fulvus (Brown lemur).